The sequence spans 222 residues: Sugar fermentation stimulation protein homolog (222 aa).

Belongs to the SfsA family.

In Thermotoga petrophila (strain ATCC BAA-488 / DSM 13995 / JCM 10881 / RKU-1), this protein is Sugar fermentation stimulation protein homolog.